The following is a 327-amino-acid chain: MSSPIRIAVTGAAGQISYSLLFRIAAGDMLGSSQPVILQLLDIPESGKVLDGVLMELQDCAFPLLTDIIVTHDPMIAFDQADIAILVGARPRGKGMERKDLLQTNGEIFREQGRALNQVVKRDAKILVVGNPANTNTLITMKNAPDLSPENFSGMLRLDHNRALSQVAMKLNQPVSHIRKMIVWGNHSSTQFPDLSHAEIDHQKVIDLIKDQTWVENSFIPTVQNRGAVVIEARGLSSAASAANAIIDHMRDWIFGTRDDDWITMGILSDGSYKIPKGVIYGFPVVCKNGGRKIVQGLEISPFSRTRLDIAYDELTQELDSIKHLLL.

Glycine 11–serine 17 serves as a coordination point for NAD(+). Substrate is bound by residues arginine 92 and arginine 98. Residues asparagine 105, glutamine 112, and valine 129–asparagine 131 each bind NAD(+). Positions 131 and 162 each coordinate substrate. Histidine 187 serves as the catalytic Proton acceptor.

The protein belongs to the LDH/MDH superfamily. MDH type 2 family.

It catalyses the reaction (S)-malate + NAD(+) = oxaloacetate + NADH + H(+). Catalyzes the reversible oxidation of malate to oxaloacetate. This is Malate dehydrogenase from Nitrosomonas europaea (strain ATCC 19718 / CIP 103999 / KCTC 2705 / NBRC 14298).